The chain runs to 210 residues: Large ribosomal subunit protein uL4 (210 aa).

Belongs to the universal ribosomal protein uL4 family. In terms of assembly, part of the 50S ribosomal subunit.

In terms of biological role, one of the primary rRNA binding proteins, this protein initially binds near the 5'-end of the 23S rRNA. It is important during the early stages of 50S assembly. It makes multiple contacts with different domains of the 23S rRNA in the assembled 50S subunit and ribosome. Functionally, forms part of the polypeptide exit tunnel. This chain is Large ribosomal subunit protein uL4, found in Orientia tsutsugamushi (strain Boryong) (Rickettsia tsutsugamushi).